The primary structure comprises 687 residues: Glycine--tRNA ligase beta subunit (687 aa).

The protein belongs to the class-II aminoacyl-tRNA synthetase family. Tetramer of two alpha and two beta subunits.

The protein resides in the cytoplasm. It catalyses the reaction tRNA(Gly) + glycine + ATP = glycyl-tRNA(Gly) + AMP + diphosphate. This is Glycine--tRNA ligase beta subunit from Trichlorobacter lovleyi (strain ATCC BAA-1151 / DSM 17278 / SZ) (Geobacter lovleyi).